Here is a 393-residue protein sequence, read N- to C-terminus: S-adenosylmethionine synthase 2 (393 aa).

Glu9 provides a ligand contact to Mg(2+). Residue His15 participates in ATP binding. Glu43 contributes to the K(+) binding site. Glu56 and Gln99 together coordinate L-methionine. ATP contacts are provided by residues 167–169, 235–238, Asp246, 252–253, Ala269, Lys273, and Lys277; these read DGK, SGRF, and RK. Asp246 contributes to the L-methionine binding site. Lys277 provides a ligand contact to L-methionine.

The protein belongs to the AdoMet synthase family. In terms of assembly, homotetramer. Mn(2+) serves as cofactor. Requires Mg(2+) as cofactor. The cofactor is Co(2+). It depends on K(+) as a cofactor.

The protein localises to the cytoplasm. It carries out the reaction L-methionine + ATP + H2O = S-adenosyl-L-methionine + phosphate + diphosphate. The protein operates within amino-acid biosynthesis; S-adenosyl-L-methionine biosynthesis; S-adenosyl-L-methionine from L-methionine: step 1/1. Functionally, catalyzes the formation of S-adenosylmethionine from methionine and ATP. The reaction comprises two steps that are both catalyzed by the same enzyme: formation of S-adenosylmethionine (AdoMet) and triphosphate, and subsequent hydrolysis of the triphosphate. May be involved in the synthesis of betain in response to abiotic stress such as high salinity. The protein is S-adenosylmethionine synthase 2 (SAMS2) of Beta vulgaris (Sugar beet).